The sequence spans 394 residues: Phosphopentomutase (394 aa).

Mn(2+) is bound by residues aspartate 14, aspartate 287, histidine 292, aspartate 328, histidine 329, and histidine 340.

The protein belongs to the phosphopentomutase family. The cofactor is Mn(2+).

It is found in the cytoplasm. The catalysed reaction is 2-deoxy-alpha-D-ribose 1-phosphate = 2-deoxy-D-ribose 5-phosphate. The enzyme catalyses alpha-D-ribose 1-phosphate = D-ribose 5-phosphate. It participates in carbohydrate degradation; 2-deoxy-D-ribose 1-phosphate degradation; D-glyceraldehyde 3-phosphate and acetaldehyde from 2-deoxy-alpha-D-ribose 1-phosphate: step 1/2. Isomerase that catalyzes the conversion of deoxy-ribose 1-phosphate (dRib-1-P) and ribose 1-phosphate (Rib-1-P) to deoxy-ribose 5-phosphate (dRib-5-P) and ribose 5-phosphate (Rib-5-P), respectively. This chain is Phosphopentomutase, found in Listeria monocytogenes serotype 4a (strain HCC23).